Here is a 230-residue protein sequence, read N- to C-terminus: 5'-methylthioadenosine/S-adenosylhomocysteine nucleosidase (230 aa).

Glu12 serves as the catalytic Proton acceptor. Residues Gly78, Val152, and 173 to 174 contribute to the substrate site; that span reads ME. Asp197 (proton donor) is an active-site residue.

It belongs to the PNP/UDP phosphorylase family. MtnN subfamily.

It catalyses the reaction S-adenosyl-L-homocysteine + H2O = S-(5-deoxy-D-ribos-5-yl)-L-homocysteine + adenine. It carries out the reaction S-methyl-5'-thioadenosine + H2O = 5-(methylsulfanyl)-D-ribose + adenine. The catalysed reaction is 5'-deoxyadenosine + H2O = 5-deoxy-D-ribose + adenine. The protein operates within amino-acid biosynthesis; L-methionine biosynthesis via salvage pathway; S-methyl-5-thio-alpha-D-ribose 1-phosphate from S-methyl-5'-thioadenosine (hydrolase route): step 1/2. Functionally, catalyzes the irreversible cleavage of the glycosidic bond in both 5'-methylthioadenosine (MTA) and S-adenosylhomocysteine (SAH/AdoHcy) to adenine and the corresponding thioribose, 5'-methylthioribose and S-ribosylhomocysteine, respectively. Also cleaves 5'-deoxyadenosine, a toxic by-product of radical S-adenosylmethionine (SAM) enzymes, into 5-deoxyribose and adenine. The sequence is that of 5'-methylthioadenosine/S-adenosylhomocysteine nucleosidase from Glaesserella parasuis serovar 5 (strain SH0165) (Haemophilus parasuis).